The chain runs to 521 residues: MEANWTAFLFQAHEASHHQQQAAQNSLLPLLSSAVEPPDQKPLLPIPITQKPQGAPETLKDAIGIKKEKPKTSFVCTYCSKAFRDSYHLRRHESCHTGIKLVSRPKKTPTTVVPLISTIAGDSSRTSLVSTIAGILSTVTTSSSGTNPSSSASTTAMPVTQSVKKPSKPVKKNHACEMCGKAFRDVYHLNRHKLSHSDEKPFECPICNQRFKRKDRMTYHVRSHEGGITKPYTCSVCGKGFSRPDHLSCHVKHVHSTERPFKCQTCTAAFATKDRLRTHMVRHEGKVSCNICGKLLSAAYITSHLKTHGQSQSINCNTCKQGISKTCMSEETSNQKQQQQQQQQQQQQQQQQQQHVTSWPGKQVETLRLWEEAVKARKKEAANLCQTSTAATTPVTLTTPFSITSSVSSGTMSNPVTVAAAMSMRSPVNVSSAVNITSPMNIGHPVTITSPLSMTSPLTLTTPVNLPTPVTAPVNIAHPVTITSPMNLPTPMTLAAPLNIAMRPVESMPFLPQALPTSPPW.

The C2H2-type 1 zinc finger occupies 74–96; it reads FVCTYCSKAFRDSYHLRRHESCH. Residues 140-155 show a composition bias toward low complexity; sequence TTSSSGTNPSSSASTT. Residues 140-167 are disordered; that stretch reads TTSSSGTNPSSSASTTAMPVTQSVKKPS. 5 C2H2-type zinc fingers span residues 174-196, 202-224, 232-255, 261-283, and 287-308; these read HACE…KLSH, FECP…VRSH, YTCS…KHVH, FKCQ…MVRH, and VSCN…LKTH. The residue at position 362 (Lys362) is an N6-acetyllysine. Tandem repeats lie at residues 394 to 400, 445 to 451, 457 to 463, and 479 to 485. Positions 394 to 485 are 4 X 7 AA repeats of P-[LV]-T-[IL]-T-[ST]-P; the sequence is PVTLTTPFSI…IAHPVTITSP (92 aa).

This sequence belongs to the krueppel C2H2-type zinc-finger protein family. As to quaternary structure, interacts with ARHGAP22. Ubiquitously expressed. Highest levels in skeletal muscle and kidney.

It localises to the nucleus. Its function is as follows. Possible transcription factor. Specifically binds to the CT/GC-rich region of the interleukin-3 promoter and mediates tax transactivation of IL-3. In Homo sapiens (Human), this protein is Vascular endothelial zinc finger 1 (VEZF1).